The chain runs to 448 residues: Trigger factor (448 aa).

Positions Gly172–Pro257 constitute a PPIase FKBP-type domain.

Belongs to the FKBP-type PPIase family. Tig subfamily.

The protein resides in the cytoplasm. It carries out the reaction [protein]-peptidylproline (omega=180) = [protein]-peptidylproline (omega=0). Functionally, involved in protein export. Acts as a chaperone by maintaining the newly synthesized protein in an open conformation. Functions as a peptidyl-prolyl cis-trans isomerase. In Burkholderia cenocepacia (strain HI2424), this protein is Trigger factor.